Here is a 143-residue protein sequence, read N- to C-terminus: Large ribosomal subunit protein uL15 (143 aa).

The segment at methionine 1–leucine 57 is disordered. Over residues arginine 21–alanine 31 the composition is skewed to gly residues.

This sequence belongs to the universal ribosomal protein uL15 family. In terms of assembly, part of the 50S ribosomal subunit.

Its function is as follows. Binds to the 23S rRNA. The polypeptide is Large ribosomal subunit protein uL15 (Ralstonia nicotianae (strain ATCC BAA-1114 / GMI1000) (Ralstonia solanacearum)).